Here is a 1819-residue protein sequence, read N- to C-terminus: Protein REDUCED CHLOROPLAST COVERAGE 2 (1819 aa).

The span at 1–17 (MAPKAGKTKPHKSKGEK) shows a compositional bias: basic residues. Disordered regions lie at residues 1 to 23 (MAPK…KEEK), 128 to 180 (KPPV…GACE), 595 to 619 (QASS…GLGK), and 634 to 664 (KANK…LEKQ). Composition is skewed to basic and acidic residues over residues 135–145 (LPKDSEKKESG) and 600–612 (SESK…KPEP). Residues 329 to 603 (EDETWGGDGG…NQASSKSESK (275 aa)) enclose the Clu domain. The stretch at 649–680 (TDNTSETEDQKELEKQNEEIEKMWKELVTETA) forms a coiled coil. TPR repeat units follow at residues 892 to 925 (GRTL…LVAV), 934 to 967 (AGAY…NERE), 976 to 1009 (MKSY…LHLT), 1018 to 1051 (AATY…NQRL), and 1060 to 1093 (AASY…LQAK). Disordered regions lie at residues 1152 to 1360 (SGIK…PMLS), 1413 to 1456 (KVNA…SPKE), 1468 to 1513 (KAFP…SESV), 1527 to 1573 (LKTV…ASAP), 1616 to 1670 (STPH…PRIM), and 1731 to 1809 (LVSE…DYSD). Basic and acidic residues-rich tracts occupy residues 1199–1224 (SSDK…EQSK) and 1230–1239 (KLVKPEATVH). Residue serine 1244 is modified to Phosphoserine. Residues 1269–1313 (KLNTNFMNVTQQPSRSRGKSTNFTSPRTSSNELSISVAGSTSSPA) are compositionally biased toward polar residues. Residue serine 1320 is modified to Phosphoserine. Polar residues predominate over residues 1343–1354 (LASSACTEQINK). Composition is skewed to polar residues over residues 1496 to 1511 (CLLN…NGSE) and 1536 to 1546 (NLPNGDSSPKS). Residues 1551-1566 (DGEKQDACEAQKEMSK) show a composition bias toward basic and acidic residues. The span at 1650 to 1665 (SFPNSTESNGEANQFN) shows a compositional bias: polar residues. Residues 1742-1759 (SEEKSGSEEESNNDKNAG) show a composition bias toward basic and acidic residues. A compositionally biased stretch (polar residues) spans 1767-1778 (QETTDTPENGHS). A compositionally biased stretch (basic and acidic residues) spans 1785-1800 (TTSHETCDEKNGERQG).

Expressed in the non-epidermal tissues of the true leaves. Not detected in the vegetative shoot meristem and leaf primordia.

It is found in the nucleus. The protein resides in the cytoplasm. The protein localises to the cytosol. Its function is as follows. Negatively regulates meristematic tissue proliferation by integrating developmental signals with carbon source availability. May act as the scaffold of a protein complex, which sequesters key factors that are required for the G2 to M transition in meristematic tissues. Together with REC2, REC3 and FMT/CLU, contributes to the establishment of the cellular volume devoted to the chloroplast compartment. The polypeptide is Protein REDUCED CHLOROPLAST COVERAGE 2 (Arabidopsis thaliana (Mouse-ear cress)).